The primary structure comprises 255 residues: HLA class II histocompatibility antigen, DQ alpha 2 chain (255 aa).

The N-terminal stretch at 1–23 (MILNKALLLGALALTAVMSPCGG) is a signal peptide. Residues 24–110 (EDIVADHVAS…RQSNSTAATN (87 aa)) are alpha-1. Topologically, residues 24–217 (EDIVADHVAS…IPAPMSELTE (194 aa)) are extracellular. N104 and N144 each carry an N-linked (GlcNAc...) asparagine glycan. Residues 111 to 204 (EVPEVTVFSK…GLDEPLLKHW (94 aa)) are alpha-2. An Ig-like C1-type domain is found at 113 to 205 (PEVTVFSKFP…LDEPLLKHWE (93 aa)). Residues C133 and C189 are joined by a disulfide bond. Positions 205–217 (EPEIPAPMSELTE) are connecting peptide. Residues 218 to 240 (TLVCALGLSVGLMGIVVGTVFII) form a helical membrane-spanning segment. Over 241–255 (QGLRSVGASRHQGLL) the chain is Cytoplasmic.

It belongs to the MHC class II family. In terms of assembly, heterodimer of an alpha and a beta subunit; also referred as MHC class II molecule. Dimer formation with HLA-DQB2, but not with HLA-DQB1, is required for efficient exit from the endoplasmic reticulum (ER). In the ER, forms a heterononamer; 3 MHC class II molecules bind to a CD74 homotrimer (also known as invariant chain or HLA class II histocompatibility antigen gamma chain). In the endosomal/lysosomal system; CD74 undergoes sequential degradation by various proteases; leaving a small fragment termed CLIP on each MHC class II molecule. MHC class II molecule interacts with HLA_DM, and HLA_DO in B-cells, in order to release CLIP and facilitate the binding of antigenic peptides. Association with HLA-DMA also occurs in skin Langerhans cells, in post-Golgi compartments. As to expression, restricted to skin Langerhans cells, although some expression at low levels may occur at the surface of B lymphoblastoid cells.

Its subcellular location is the cell membrane. The protein resides in the endoplasmic reticulum membrane. It localises to the golgi apparatus. It is found in the trans-Golgi network membrane. The protein localises to the endosome membrane. Its subcellular location is the lysosome membrane. Functionally, binds peptides derived from antigens that access the endocytic route of antigen presenting cells (APC) and presents them on the cell surface for recognition by the CD4 T-cells. The peptide binding cleft accommodates peptides of 10-30 residues. The peptides presented by MHC class II molecules are generated mostly by degradation of proteins that access the endocytic route, where they are processed by lysosomal proteases and other hydrolases. Exogenous antigens that have been endocytosed by the APC are thus readily available for presentation via MHC II molecules, and for this reason this antigen presentation pathway is usually referred to as exogenous. As membrane proteins on their way to degradation in lysosomes as part of their normal turn-over are also contained in the endosomal/lysosomal compartments, exogenous antigens must compete with those derived from endogenous components. Autophagy is also a source of endogenous peptides, autophagosomes constitutively fuse with MHC class II loading compartments. In addition to APCs, other cells of the gastrointestinal tract, such as epithelial cells, express MHC class II molecules and CD74 and act as APCs, which is an unusual trait of the GI tract. To produce a MHC class II molecule that presents an antigen, three MHC class II molecules (heterodimers of an alpha and a beta chain) associate with a CD74 trimer in the ER to form a heterononamer. Soon after the entry of this complex into the endosomal/lysosomal system where antigen processing occurs, CD74 undergoes a sequential degradation by various proteases, including CTSS and CTSL, leaving a small fragment termed CLIP (class-II-associated invariant chain peptide). The removal of CLIP is facilitated by HLA-DM via direct binding to the alpha-beta-CLIP complex so that CLIP is released. HLA-DM stabilizes MHC class II molecules until primary high affinity antigenic peptides are bound. The MHC II molecule bound to a peptide is then transported to the cell membrane surface. In B-cells, the interaction between HLA-DM and MHC class II molecules is regulated by HLA-DO. Primary dendritic cells (DCs) also to express HLA-DO. Lysosomal microenvironment has been implicated in the regulation of antigen loading into MHC II molecules, increased acidification produces increased proteolysis and efficient peptide loading. The sequence is that of HLA class II histocompatibility antigen, DQ alpha 2 chain (HLA-DQA2) from Homo sapiens (Human).